The sequence spans 222 residues: Putative auxin response factor 23 (222 aa).

Residues 126–222 (FTKVLTASDT…ETGELRVGIR (97 aa)) constitute a DNA-binding region (TF-B3).

This sequence belongs to the ARF family. In terms of assembly, homo and heterodimers.

The protein resides in the nucleus. Its function is as follows. Auxin response factors (ARFs) are transcriptional factors that binds specifically to the DNA sequence 5'-TGTCTC-3' found in the auxin-responsive promoter elements (AuxREs). Could act as transcriptional activator or repressor. Formation of heterodimers with Aux/IAA proteins may alter their ability to modulate early auxin response genes expression. This chain is Putative auxin response factor 23 (ARF23), found in Arabidopsis thaliana (Mouse-ear cress).